Consider the following 637-residue polypeptide: Cell division cycle-related protein res1/sct1 (637 aa).

Residues 6-112 enclose the HTH APSES-type domain; sequence IHKITYSGVE…YSGSAFMPMS (107 aa). Positions 37–58 form a DNA-binding region, H-T-H motif; the sequence is ATQILKIAELDKPRRTRILEKF. The segment at 114-137 is disordered; the sequence is FTPQSNRKPTEAYRRNSPVKKSFS. 2 ANK repeats span residues 236–265 and 357–386; these read DGHTALHWAAAMGNLEMMHALLQAGANVVA and HGDTALLICARNGAKKCARLLLSFYASSSI.

As to quaternary structure, DSC1 contains cdc10 and sct1/res1.

Its function is as follows. Acts as a positive regulator of the mitotic cell cycle and as a negative regulator of sexual differentiation. May be involved in the transcriptional regulation of the cdc22 and cdt1 genes. Is an integral component of the DSC1-like complex. This chain is Cell division cycle-related protein res1/sct1 (res1), found in Schizosaccharomyces pombe (strain 972 / ATCC 24843) (Fission yeast).